A 100-amino-acid chain; its full sequence is MAKISLIQREFKRQRLVLKYEKKRTFLKREIQRTPFLKQKLQFHRILQQLPRNSASVRLHNRCLVTGRSRGYYRDFGLSRHVLREMAHQGFLPGVIKSSW.

The protein belongs to the universal ribosomal protein uS14 family. Part of the 30S ribosomal subunit.

The protein resides in the plastid. It localises to the chloroplast. Functionally, binds 16S rRNA, required for the assembly of 30S particles. The polypeptide is Small ribosomal subunit protein uS14c (Oedogonium cardiacum (Filamentous green alga)).